A 353-amino-acid chain; its full sequence is Photosystem II protein D1 (353 aa).

T2 carries the post-translational modification N-acetylthreonine. T2 is subject to Phosphothreonine. 3 consecutive transmembrane segments (helical) span residues 29–46, 118–133, and 142–156; these read YIGW…TATS, HFLL…EWEL, and WIAV…AATA. H118 is a binding site for chlorophyll a. Residue Y126 coordinates pheophytin a. [CaMn4O5] cluster contacts are provided by D170 and E189. A helical transmembrane segment spans residues 197–218; that stretch reads FHMLGVAGVFGGSLFSAMHGSL. H198 lines the chlorophyll a pocket. Residues H215 and 264–265 contribute to the a quinone site; that span reads SF. H215 provides a ligand contact to Fe cation. H272 contributes to the Fe cation binding site. The helical transmembrane segment at 274–288 threads the bilayer; the sequence is FLAAWPVVCIWFTAL. [CaMn4O5] cluster-binding residues include H332, E333, D342, and A344. The propeptide occupies 345-353; sequence SVDAPAVQG.

The protein belongs to the reaction center PufL/M/PsbA/D family. In terms of assembly, PSII is composed of 1 copy each of membrane proteins PsbA, PsbB, PsbC, PsbD, PsbE, PsbF, PsbH, PsbI, PsbJ, PsbK, PsbL, PsbM, PsbT, PsbX, PsbY, PsbZ, Psb30/Ycf12, at least 3 peripheral proteins of the oxygen-evolving complex and a large number of cofactors. It forms dimeric complexes. The D1/D2 heterodimer binds P680, chlorophylls that are the primary electron donor of PSII, and subsequent electron acceptors. It shares a non-heme iron and each subunit binds pheophytin, quinone, additional chlorophylls, carotenoids and lipids. D1 provides most of the ligands for the Mn4-Ca-O5 cluster of the oxygen-evolving complex (OEC). There is also a Cl(-1) ion associated with D1 and D2, which is required for oxygen evolution. The PSII complex binds additional chlorophylls, carotenoids and specific lipids. serves as cofactor. Post-translationally, tyr-161 forms a radical intermediate that is referred to as redox-active TyrZ, YZ or Y-Z. C-terminally processed by CTPA; processing is essential to allow assembly of the oxygen-evolving complex and thus photosynthetic growth.

The protein localises to the plastid. Its subcellular location is the chloroplast thylakoid membrane. It carries out the reaction 2 a plastoquinone + 4 hnu + 2 H2O = 2 a plastoquinol + O2. Its function is as follows. Photosystem II (PSII) is a light-driven water:plastoquinone oxidoreductase that uses light energy to abstract electrons from H(2)O, generating O(2) and a proton gradient subsequently used for ATP formation. It consists of a core antenna complex that captures photons, and an electron transfer chain that converts photonic excitation into a charge separation. The D1/D2 (PsbA/PsbD) reaction center heterodimer binds P680, the primary electron donor of PSII as well as several subsequent electron acceptors. The protein is Photosystem II protein D1 of Nephroselmis olivacea (Green alga).